The chain runs to 221 residues: Probable septum site-determining protein MinC (221 aa).

Belongs to the MinC family. As to quaternary structure, interacts with MinD and FtsZ.

Cell division inhibitor that blocks the formation of polar Z ring septums. Rapidly oscillates between the poles of the cell to destabilize FtsZ filaments that have formed before they mature into polar Z rings. Prevents FtsZ polymerization. The sequence is that of Probable septum site-determining protein MinC from Shewanella frigidimarina (strain NCIMB 400).